Here is a 122-residue protein sequence, read N- to C-terminus: RxLR effector protein Avh52 (122 aa).

The signal sequence occupies residues 1–21 (MRLTSILVLVIAATFHTTGTA). The RxLR-dEER signature appears at 50–68 (RLLRRVEKDKVDYEQDEQR). Residues 69-86 (SFGALKDAVKKLNPVTAV) form a TAP1-binding region. The interval 87–98 (KKFFKQRARRKK) is nuclear localization signal (NLS).

Belongs to the RxLR effector family. As to quaternary structure, interacts with host acetyl transferase TAP1.

The protein localises to the secreted. It localises to the host nucleus. In terms of biological role, effector that suppresses plant defense responses during the early stages of pathogen infection. Suppresses cell death induced by effectors and PAMPs in plant hosts. Interacts with host acetyltransferase TAP1 and causes TAP1 relocation into the nucleus where it acetylates histones H2A and H3 during early infection, thereby promoting susceptibility of host plant to P.sojae. In Phytophthora sojae (Soybean stem and root rot agent), this protein is RxLR effector protein Avh52.